The following is a 57-amino-acid chain: Potassium channel toxin gamma-KTx 2.1 (57 aa).

Positions 1 to 21 (MKISFVLLLTLFICSIGWSEA) are cleaved as a signal peptide. Intrachain disulfides connect Cys-28–Cys-49, Cys-34–Cys-54, and Cys-38–Cys-56.

It belongs to the short scorpion toxin superfamily. Potassium channel inhibitor family. Gamma-KTx 2 subfamily. In terms of tissue distribution, expressed by the venom gland.

It localises to the secreted. In terms of biological role, blocks human and/or rat Kv11.1/KCNH2/ERG1, Kv11.2/KCNH6/ERG2 and Kv11.3/KCNH7/ERG3 by binding to channel outer vestibule (S5P domain) with a 1:1 stoichiometry. Inhibition data are the following: hERG1 (reversible, Kd=7.7 nM, IC(50)=3.3 nM, IC(50)=11.9 nM), rERG1 (reversible, Kd=19 nM), hERG2 (reversible, Kd=77 nM), rERG2 (irreversible, Kd=4.2 nM), hERG3 (reversible, Kd=11.5 nM) and rERG3 (reversible, Kd=747 nM) potassium channels. Also has a minimal effect on rat ELK1/KCNH4 potassium channels (9% inhibition at 100 nM). Both this toxin and CnErgTx1 (AC Q86QT3) share mechanism of action and have overlapping binding sites on ERG1. The potency of these two toxins is not affected by elevating potassium ion concentration from 2 to 98 mM. In addition, at high toxin concentrations, block of ERG1 macroscopic currents by these two toxins is incomplete (88%). The blockade by this toxin is preferentially closed channel state-dependent, with a component of open, but not inactive state-dependent blockade. This toxin produces a concentration-dependent prolongation of QTc in the isolated rabbit heart (16.3% at 100 nM). The chain is Potassium channel toxin gamma-KTx 2.1 from Mesobuthus eupeus (Lesser Asian scorpion).